The sequence spans 479 residues: tRNA-2-methylthio-N(6)-dimethylallyladenosine synthase (479 aa).

The 118-residue stretch at 3–120 folds into the MTTase N-terminal domain; the sequence is KKLYIKTWGC…LPEMVNQVSE (118 aa). Residues cysteine 12, cysteine 49, cysteine 83, cysteine 157, cysteine 161, and cysteine 164 each coordinate [4Fe-4S] cluster. The region spanning 143–375 is the Radical SAM core domain; sequence KADGASAFVS…QQRLNQQSMA (233 aa). Positions 378-441 constitute a TRAM domain; it reads RRMLETEQRI…PNSLRGELIR (64 aa).

The protein belongs to the methylthiotransferase family. MiaB subfamily. Monomer. It depends on [4Fe-4S] cluster as a cofactor.

It localises to the cytoplasm. It carries out the reaction N(6)-dimethylallyladenosine(37) in tRNA + (sulfur carrier)-SH + AH2 + 2 S-adenosyl-L-methionine = 2-methylsulfanyl-N(6)-dimethylallyladenosine(37) in tRNA + (sulfur carrier)-H + 5'-deoxyadenosine + L-methionine + A + S-adenosyl-L-homocysteine + 2 H(+). Catalyzes the methylthiolation of N6-(dimethylallyl)adenosine (i(6)A), leading to the formation of 2-methylthio-N6-(dimethylallyl)adenosine (ms(2)i(6)A) at position 37 in tRNAs that read codons beginning with uridine. This chain is tRNA-2-methylthio-N(6)-dimethylallyladenosine synthase, found in Idiomarina loihiensis (strain ATCC BAA-735 / DSM 15497 / L2-TR).